A 408-amino-acid chain; its full sequence is uncharacterized protein (408 aa).

A helical transmembrane segment spans residues 56–76 (YWAGPAAASMVAAVTPYVAWL).

Belongs to the mycobacterial PPE family.

It is found in the cell membrane. This is an uncharacterized protein from Mycobacterium bovis (strain ATCC BAA-935 / AF2122/97).